Here is a 574-residue protein sequence, read N- to C-terminus: Peptidyl-prolyl cis-trans isomerase FKBP9 (574 aa).

The first 26 residues, 1-26 (MAIRARSWRPPPPPLLLLLLWVTGQA), serve as a signal peptide directing secretion. 4 PPIase FKBP-type domains span residues 58-146 (GDFV…MDIW), 170-258 (SDFV…LDLH), 282-369 (GDFL…IDFH), and 393-481 (GDYL…LELV). N-linked (GlcNAc...) asparagine glycosylation is found at Asn-178, Asn-290, Asn-306, and Asn-401. EF-hand domains lie at 492–527 (WNGE…QVAS) and 537–572 (DAEM…TKHD). 10 residues coordinate Ca(2+): Asp-505, Asp-507, Asp-509, Glu-511, Glu-516, Asp-550, Asn-552, Asp-554, Lys-556, and Glu-561. The Prevents secretion from ER signature appears at 571–574 (HDEL).

Post-translationally, phosphorylated.

The protein resides in the endoplasmic reticulum. The catalysed reaction is [protein]-peptidylproline (omega=180) = [protein]-peptidylproline (omega=0). Its activity is regulated as follows. Inhibited by FK506. PPIases accelerate the folding of proteins during protein synthesis. This chain is Peptidyl-prolyl cis-trans isomerase FKBP9 (FKBP9), found in Bos taurus (Bovine).